Here is a 368-residue protein sequence, read N- to C-terminus: 1-deoxy-D-xylulose 5-phosphate reductoisomerase (368 aa).

Thr-10, Gly-11, Ser-12, Ile-13, Gln-38, and Asn-100 together coordinate NADPH. Position 101 (Lys-101) interacts with 1-deoxy-D-xylulose 5-phosphate. Position 102 (Glu-102) interacts with NADPH. A Mn(2+)-binding site is contributed by Asp-125. The 1-deoxy-D-xylulose 5-phosphate site is built by Ser-126, Glu-127, Ser-151, and His-172. Glu-127 contributes to the Mn(2+) binding site. Gly-178 provides a ligand contact to NADPH. 1-deoxy-D-xylulose 5-phosphate is bound by residues Ser-185, Asn-190, Lys-191, and Glu-194. Glu-194 serves as a coordination point for Mn(2+).

It belongs to the DXR family. Mg(2+) is required as a cofactor. The cofactor is Mn(2+).

It catalyses the reaction 2-C-methyl-D-erythritol 4-phosphate + NADP(+) = 1-deoxy-D-xylulose 5-phosphate + NADPH + H(+). It participates in isoprenoid biosynthesis; isopentenyl diphosphate biosynthesis via DXP pathway; isopentenyl diphosphate from 1-deoxy-D-xylulose 5-phosphate: step 1/6. Functionally, catalyzes the NADPH-dependent rearrangement and reduction of 1-deoxy-D-xylulose-5-phosphate (DXP) to 2-C-methyl-D-erythritol 4-phosphate (MEP). The protein is 1-deoxy-D-xylulose 5-phosphate reductoisomerase of Tropheryma whipplei (strain TW08/27) (Whipple's bacillus).